The primary structure comprises 383 residues: Teichoic acid glycerol-phosphate primase (383 aa).

It belongs to the CDP-glycerol glycerophosphotransferase family.

The protein localises to the cell membrane. It catalyses the reaction N-acetyl-beta-D-mannosaminyl-(1-&gt;4)-N-acetyl-alpha-D-glucosaminyl di-trans,octa-cis-undecaprenyl diphosphate + CDP-glycerol = 4-O-[(2R)-glycerylphospho]-N-acetyl-beta-D-mannosaminyl-(1-&gt;4)-N-acetyl-alpha-D-glucosaminyl di-trans,octa-cis-undecaprenyl diphosphate + CMP + H(+). Its pathway is cell wall biogenesis; poly(ribitol phosphate) teichoic acid biosynthesis. In terms of biological role, catalyzes the addition of a single glycerol phosphate residue to the prenoldiphosphate-linked disaccharide. In Bacillus spizizenii (strain ATCC 23059 / NRRL B-14472 / W23) (Bacillus subtilis subsp. spizizenii), this protein is Teichoic acid glycerol-phosphate primase (tarB).